We begin with the raw amino-acid sequence, 141 residues long: Granulocyte-macrophage colony-stimulating factor (141 aa).

A signal peptide spans 1–17 (MWLQNLLFLGIVVYSLS). An O-linked (GalNAc...) serine glycan is attached at Ser22. O-linked (GalNAc...) threonine glycosylation is present at Thr27. 2 disulfide bridges follow: Cys68–Cys110 and Cys102–Cys135. Asn83 and Asn92 each carry an N-linked (GlcNAc...) asparagine glycan.

It belongs to the GM-CSF family. As to quaternary structure, monomer. The signaling GM-CSF receptor complex is a dodecamer of two head-to-head hexamers of two alpha, two beta, and two ligand subunits.

The protein localises to the secreted. Functionally, cytokine that stimulates the growth and differentiation of hematopoietic precursor cells from various lineages, including granulocytes, macrophages, eosinophils and erythrocytes. The protein is Granulocyte-macrophage colony-stimulating factor (Csf2) of Mus musculus (Mouse).